Reading from the N-terminus, the 352-residue chain is Aromatic amino acid aminotransferase (352 aa).

The residue at position 217 (Lys217) is an N6-(pyridoxal phosphate)lysine.

The protein belongs to the class-II pyridoxal-phosphate-dependent aminotransferase family. In terms of assembly, homodimer. Requires pyridoxal 5'-phosphate as cofactor.

The catalysed reaction is an aromatic L-alpha-amino acid + 2-oxoglutarate = an aromatic oxo-acid + L-glutamate. Its function is as follows. Aminotransferase that catalyzes the conversion of aromatic amino acids and 2-oxoglutarate into corresponding aromatic oxo acids and L-glutamate. This chain is Aromatic amino acid aminotransferase, found in Cutibacterium acnes (strain DSM 16379 / KPA171202) (Propionibacterium acnes).